The chain runs to 27 residues: L-amino-acid oxidase (27 aa).

In terms of assembly, homodimer; non-covalently linked. The cofactor is FAD. Contains 2 disulfide bonds. Post-translationally, N-glycosylated. As to expression, expressed by the venom gland.

Its subcellular location is the secreted. The enzyme catalyses an L-alpha-amino acid + O2 + H2O = a 2-oxocarboxylate + H2O2 + NH4(+). It catalyses the reaction L-leucine + O2 + H2O = 4-methyl-2-oxopentanoate + H2O2 + NH4(+). Its function is as follows. Catalyzes an oxidative deamination of predominantly hydrophobic and aromatic L-amino acids, thus producing hydrogen peroxide that may contribute to the diverse toxic effects of this enzyme. Shows activity on L-Leu. Exhibits diverse biological activities, such as hemolysis, edema, apoptosis, as well as induction of platelet aggregation. Effects of snake L-amino oxidases on platelets are controversial, since they either induce aggregation or inhibit agonist-induced aggregation. These different effects are probably due to different experimental conditions. Unlike other snake venom L-amino acid oxidases, does not induce hemorrhage. This protein may also have antibacterial and antiparasitic activities. This Eristicophis macmahoni (Leaf-nosed viper) protein is L-amino-acid oxidase.